The primary structure comprises 124 residues: Small ribosomal subunit protein uS12 (124 aa).

A 3-methylthioaspartic acid modification is found at aspartate 89. The tract at residues 102–124 (LDTSGVNNRKHGRSKYGTKRPKS) is disordered. Residues 109 to 124 (NRKHGRSKYGTKRPKS) show a composition bias toward basic residues.

It belongs to the universal ribosomal protein uS12 family. Part of the 30S ribosomal subunit. Contacts proteins S8 and S17. May interact with IF1 in the 30S initiation complex.

Its function is as follows. With S4 and S5 plays an important role in translational accuracy. Functionally, interacts with and stabilizes bases of the 16S rRNA that are involved in tRNA selection in the A site and with the mRNA backbone. Located at the interface of the 30S and 50S subunits, it traverses the body of the 30S subunit contacting proteins on the other side and probably holding the rRNA structure together. The combined cluster of proteins S8, S12 and S17 appears to hold together the shoulder and platform of the 30S subunit. The chain is Small ribosomal subunit protein uS12 from Francisella tularensis subsp. novicida (strain U112).